Consider the following 111-residue polypeptide: Nucleoid-associated protein Cphamn1_1179 (111 aa).

This sequence belongs to the YbaB/EbfC family. As to quaternary structure, homodimer.

It localises to the cytoplasm. It is found in the nucleoid. Its function is as follows. Binds to DNA and alters its conformation. May be involved in regulation of gene expression, nucleoid organization and DNA protection. In Chlorobium phaeobacteroides (strain BS1), this protein is Nucleoid-associated protein Cphamn1_1179.